Consider the following 540-residue polypeptide: Eukaryotic translation initiation factor 3 subunit L (540 aa).

The PCI domain occupies 307-515 (TFSDILLYIQ…IHIADTKVSH (209 aa)).

Belongs to the eIF-3 subunit L family. In terms of assembly, component of the eukaryotic translation initiation factor 3 (eIF-3) complex. The eIF-3 complex interacts with pix.

The protein localises to the cytoplasm. Functionally, component of the eukaryotic translation initiation factor 3 (eIF-3) complex, which is involved in protein synthesis of a specialized repertoire of mRNAs and, together with other initiation factors, stimulates binding of mRNA and methionyl-tRNAi to the 40S ribosome. The eIF-3 complex specifically targets and initiates translation of a subset of mRNAs involved in cell proliferation. The chain is Eukaryotic translation initiation factor 3 subunit L from Drosophila grimshawi (Hawaiian fruit fly).